The following is a 306-amino-acid chain: Phosphatidate cytidylyltransferase (306 aa).

Residues 1-28 are disordered; sequence MTTNDAGTGNPAEQPARGAKQQPATETS. Transmembrane regions (helical) follow at residues 36 to 56, 82 to 102, 103 to 123, 151 to 171, 180 to 200, 218 to 238, 241 to 261, and 285 to 305; these read AAIV…VFVP, GYLI…WLTW, PFGA…CMIW, ATVF…MLVY, FCMM…GVLF, FAGS…FLVG, PWIG…GDLV, and MDRL…LTLL.

Belongs to the CDS family.

It localises to the cell membrane. It catalyses the reaction a 1,2-diacyl-sn-glycero-3-phosphate + CTP + H(+) = a CDP-1,2-diacyl-sn-glycerol + diphosphate. It participates in phospholipid metabolism; CDP-diacylglycerol biosynthesis; CDP-diacylglycerol from sn-glycerol 3-phosphate: step 3/3. The sequence is that of Phosphatidate cytidylyltransferase (cdsA) from Mycobacterium bovis (strain ATCC BAA-935 / AF2122/97).